The primary structure comprises 213 residues: MGQKVHPYGFRLGYNKNWQSRWFSKKDYANFIYEDYKIRSYIKKLLYSAGISKMEIERAGGKICLMLSTARPGIVIGRKGVEIEKLRLELRKNFGQEFSLEVTEVRRPEVDAQLVAENIAMQLERRVAFRRAMKRTVSMARKFGAEGIKITCSGRLAGAEIARTEWYRDGRVPLQTLRADIDYGFAEAHTTYGIIGVKVWIYKGEVLDKEVEK.

The KH type-2 domain occupies 38–106 (IRSYIKKLLY…EFSLEVTEVR (69 aa)).

Belongs to the universal ribosomal protein uS3 family. In terms of assembly, part of the 30S ribosomal subunit. Forms a tight complex with proteins S10 and S14.

Functionally, binds the lower part of the 30S subunit head. Binds mRNA in the 70S ribosome, positioning it for translation. This is Small ribosomal subunit protein uS3 from Lawsonia intracellularis (strain PHE/MN1-00).